Consider the following 432-residue polypeptide: MVRCLWAAECCWLPPKRKQPFEDTMYTTYVARQPILNAKRHTLGYELLFRDGEKNAFPEYMDADRATYRLIVENFLSLGTNPRIARSRCFINFPHKSLIRRLPLTLPREQIVVEILETCQPTDDLFEAVQELSQRGYLLALDDFVYSPAWERFLPYVQIVKIDIMAMGLDKACEFVRGRLAQGSRRRFLAERVETEDEFHQARHAGFTFFQGYFFSKPEIIKQRYVSPEHVIAMQLFREVCQPEVDYVRVERLVAQDIALSYKLLRFVNTMSDRISVSISSFRQALVYLGQDKLRIFVSLAVASYISSKKPKELYNLSLQRAQFCQLMATHTHFKAHREQAFLIGMFSVLDALLDTSIEQLVEQLPLADDVKLALREREGPLGTLLDLEECFEKADWQGVEQHCLELGFDLEDVRQELIEAQRWSQDINRLI.

Positions 1–232 constitute an EAL domain; that stretch reads MVRCLWAAEC…QRYVSPEHVI (232 aa). Residues 226–413 form the HDOD domain; that stretch reads VSPEHVIAMQ…CLELGFDLED (188 aa).

The catalysed reaction is 3',3'-c-di-GMP + H2O = 5'-phosphoguanylyl(3'-&gt;5')guanosine + H(+). Functionally, phosphodiesterase (PDE) that catalyzes the hydrolysis of cyclic diguanylate (c-di-GMP). Positively regulates motility and negatively regulates biofilm formation. This is Cyclic di-GMP phosphodiesterase CdgJ from Vibrio cholerae serotype O1 (strain ATCC 39315 / El Tor Inaba N16961).